The chain runs to 217 residues: Large ribosomal subunit protein uL3 (217 aa).

It belongs to the universal ribosomal protein uL3 family. In terms of assembly, part of the 50S ribosomal subunit. Forms a cluster with proteins L14 and L19.

Functionally, one of the primary rRNA binding proteins, it binds directly near the 3'-end of the 23S rRNA, where it nucleates assembly of the 50S subunit. This is Large ribosomal subunit protein uL3 from Mycobacterium ulcerans (strain Agy99).